A 1080-amino-acid polypeptide reads, in one-letter code: Histone-lysine N-methyltransferase, H3 lysine-4 specific (1080 aa).

Disordered regions lie at residues methionine 1–asparagine 46, asparagine 54–serine 73, and tyrosine 78–serine 121. A binds SWD2 region spans residues methionine 1–isoleucine 230. A compositionally biased stretch (polar residues) spans serine 11–glycine 28. Low complexity predominate over residues histidine 29–asparagine 46. Positions asparagine 54–histidine 67 are enriched in basic and acidic residues. Composition is skewed to polar residues over residues tyrosine 78–proline 87 and arginine 99–serine 121. The segment at isoleucine 230–leucine 569 is binds RNA. The interval lysine 356–leucine 569 is binds SHG1. Serine 625 carries the phosphoserine modification. The segment at alanine 646–aspartate 729 is disordered. The segment covering aspartate 674–alanine 692 has biased composition (acidic residues). The span at proline 693–histidine 712 shows a compositional bias: basic and acidic residues. Residues methionine 762 to lysine 938 are binds SPP1. A contributes to RNA binding region spans residues methionine 762–lysine 938. Positions methionine 762–lysine 938 are required for catalytic activity. Threonine 875 is modified (phosphothreonine). 2 stretches are compositionally biased toward basic and acidic residues: residues glutamate 877–serine 890 and serine 899–arginine 909. The tract at residues glutamate 877–arginine 909 is disordered. A RxxxRR motif motif is present at residues arginine 904–arginine 909. The SET domain occupies lysine 938–lysine 1055. Tyrosine 1054 provides a ligand contact to S-adenosyl-L-methionine. Positions glutamate 1064–asparagine 1080 constitute a Post-SET domain.

This sequence belongs to the class V-like SAM-binding methyltransferase superfamily. As to quaternary structure, component of the Set1C/COMPASS complex which consists of SET1(2), BRE2(2), SPP1(2), SDC1(1), SHG1(1), SWD1(1), SWD2(1), and SWD3(1). Interacts with MEC3.

It is found in the nucleus. It localises to the chromosome. The enzyme catalyses L-lysyl(4)-[histone H3] + 3 S-adenosyl-L-methionine = N(6),N(6),N(6)-trimethyl-L-lysyl(4)-[histone H3] + 3 S-adenosyl-L-homocysteine + 3 H(+). It carries out the reaction N(6)-methyl-L-lysyl(4)-[histone H3] + S-adenosyl-L-methionine = N(6),N(6)-dimethyl-L-lysyl(4)-[histone H3] + S-adenosyl-L-homocysteine + H(+). It catalyses the reaction N(6),N(6)-dimethyl-L-lysyl(4)-[histone H3] + S-adenosyl-L-methionine = N(6),N(6),N(6)-trimethyl-L-lysyl(4)-[histone H3] + S-adenosyl-L-homocysteine + H(+). Its function is as follows. Catalytic component of the COMPASS (Set1C) complex that specifically mono-, di- and trimethylates histone H3 to form H3K4me1/2/3. Binds RNAs involved in chromosome segregation, splicing and transcriptional regulation; appears to bind transcripts both co- and post-transcriptionally and binding might negatively affect its histone methyltransferase activity. COMPASS recognizes ubiquitinated H2B on one face of the nucleosome which stimulates the methylation of H3 on the opposing face. Plays a role in telomere length maintenance and transcription elongation regulation. This is Histone-lysine N-methyltransferase, H3 lysine-4 specific from Saccharomyces cerevisiae (strain ATCC 204508 / S288c) (Baker's yeast).